Here is a 248-residue protein sequence, read N- to C-terminus: Deoxyribose-phosphate aldolase (248 aa).

The active-site Proton donor/acceptor is the Asp106. The active-site Schiff-base intermediate with acetaldehyde is the Lys168. Lys197 acts as the Proton donor/acceptor in catalysis.

Belongs to the DeoC/FbaB aldolase family. DeoC type 1 subfamily.

It is found in the cytoplasm. It catalyses the reaction 2-deoxy-D-ribose 5-phosphate = D-glyceraldehyde 3-phosphate + acetaldehyde. It functions in the pathway carbohydrate degradation; 2-deoxy-D-ribose 1-phosphate degradation; D-glyceraldehyde 3-phosphate and acetaldehyde from 2-deoxy-alpha-D-ribose 1-phosphate: step 2/2. Functionally, catalyzes a reversible aldol reaction between acetaldehyde and D-glyceraldehyde 3-phosphate to generate 2-deoxy-D-ribose 5-phosphate. The polypeptide is Deoxyribose-phosphate aldolase (Sinorhizobium medicae (strain WSM419) (Ensifer medicae)).